Here is a 99-residue protein sequence, read N- to C-terminus: Integration host factor subunit alpha (99 aa).

The interval 49 to 73 (FGNFDLRDKNQRPGRNPKTGEDIPI) is disordered.

The protein belongs to the bacterial histone-like protein family. Heterodimer of an alpha and a beta chain.

This protein is one of the two subunits of integration host factor, a specific DNA-binding protein that functions in genetic recombination as well as in transcriptional and translational control. In Serratia marcescens, this protein is Integration host factor subunit alpha (ihfA).